Reading from the N-terminus, the 510-residue chain is MVMELHNHTPFSIYFITSILFIFFVFFKLVQRSDSKTSSTCKLPPGPRTLPLIGNIHQIVGSLPVHYYLKNLADKYGPLMHLKLGEVSNIIVTSPEMAQEIMKTHDLNFSDRPDFVLSRIVSYNGSGIVFSQHGDYWRQLRKICTVELLTAKRVQSFRSIREEEVAELVKKIAATASEEGGSIFNLTQSIYSMTFGIAARAAFGKKSRYQQVFISNMHKQLMLLGGFSVADLYPSSRVFQMMGATGKLEKVHRVTDRVLQDIIDEHKNRNRSSEEREAVEDLVDVLLKFQKESEFRLTDDNIKAVIQDIFIGGGETSSSVVEWGMSELIRNPRVMEEAQAEVRRVYDSKGYVDETELHQLIYLKSIIKETMRLHPPVPLLVPRVSRERCQINGYEIPSKTRIIINAWAIGRNPKYWGETESFKPERFLNSSIDFRGTDFEFIPFGAGRRICPGITFAIPNIELPLAQLLYHFDWKLPNKMKNEELDMTESNGITLRRQNDLCLIPITRLP.

Cysteine 451 serves as a coordination point for heme.

Belongs to the cytochrome P450 family. Requires heme as cofactor.

The sequence is that of Cytochrome P450 71D10 (CYP71D10) from Glycine max (Soybean).